The primary structure comprises 189 residues: Pyridoxal 5'-phosphate synthase subunit PdxT (189 aa).

47-49 (GES) is a binding site for L-glutamine. The active-site Nucleophile is the C79. L-glutamine contacts are provided by residues R105 and 132-133 (IR). Active-site charge relay system residues include H168 and E170.

The protein belongs to the glutaminase PdxT/SNO family. In the presence of PdxS, forms a dodecamer of heterodimers. Only shows activity in the heterodimer.

The enzyme catalyses aldehydo-D-ribose 5-phosphate + D-glyceraldehyde 3-phosphate + L-glutamine = pyridoxal 5'-phosphate + L-glutamate + phosphate + 3 H2O + H(+). It catalyses the reaction L-glutamine + H2O = L-glutamate + NH4(+). The protein operates within cofactor biosynthesis; pyridoxal 5'-phosphate biosynthesis. Catalyzes the hydrolysis of glutamine to glutamate and ammonia as part of the biosynthesis of pyridoxal 5'-phosphate. The resulting ammonia molecule is channeled to the active site of PdxS. The chain is Pyridoxal 5'-phosphate synthase subunit PdxT from Methanocorpusculum labreanum (strain ATCC 43576 / DSM 4855 / Z).